We begin with the raw amino-acid sequence, 941 residues long: Cell wall protein IFF3 (941 aa).

A signal peptide spans 1-20 (MQLFQNILVSIALLTQVVFA). 9 N-linked (GlcNAc...) asparagine glycosylation sites follow: Asn-36, Asn-367, Asn-686, Asn-732, Asn-790, Asn-818, Asn-825, Asn-884, and Asn-917. Asn-917 is lipidated: GPI-anchor amidated asparagine. A propeptide spans 918–941 (GSNKESIENIKYLTLVVFGLMMFM) (removed in mature form).

Belongs to the HYR1/IFF family. In terms of processing, the GPI-anchor is attached to the protein in the endoplasmic reticulum and serves to target the protein to the cell surface. There, the glucosamine-inositol phospholipid moiety is cleaved off and the GPI-modified mannoprotein is covalently attached via its lipidless GPI glycan remnant to the 1,6-beta-glucan of the outer cell wall layer.

Its subcellular location is the secreted. It is found in the cell wall. The protein localises to the membrane. GPI-anchored cell wall protein involved in cell wall organization, hyphal growth, as well as in host-fungal interaction and virulence. This is Cell wall protein IFF3 (IFF3) from Candida albicans (strain SC5314 / ATCC MYA-2876) (Yeast).